We begin with the raw amino-acid sequence, 173 residues long: Cytochrome c-type biogenesis protein CcmE (173 aa).

Over 1 to 8 (MNPRRKSR) the chain is Cytoplasmic. The helical; Signal-anchor for type II membrane protein transmembrane segment at 9 to 29 (FKLVIFVVLGIAIASGLMLYA) threads the bilayer. Topologically, residues 30–173 (LRQNIDLFYT…RDRQEKEGAK (144 aa)) are periplasmic. The heme site is built by His131 and Tyr135. The disordered stretch occupies residues 152 to 173 (GIEAADLKGESARDRQEKEGAK). The segment covering 156-173 (ADLKGESARDRQEKEGAK) has biased composition (basic and acidic residues).

This sequence belongs to the CcmE/CycJ family.

Its subcellular location is the cell inner membrane. In terms of biological role, heme chaperone required for the biogenesis of c-type cytochromes. Transiently binds heme delivered by CcmC and transfers the heme to apo-cytochromes in a process facilitated by CcmF and CcmH. This Haemophilus influenzae (strain ATCC 51907 / DSM 11121 / KW20 / Rd) protein is Cytochrome c-type biogenesis protein CcmE.